The chain runs to 204 residues: Uridylate kinase (204 aa).

26–31 provides a ligand contact to ATP; that stretch reads GAGKGT. The tract at residues 46–76 is NMP; that stretch reads SAGDLLRAEQGRAGSQYGELIKNCIKEGQIV. Residues Arg-52, 74–76, 104–107, and Gln-111 each bind a ribonucleoside 5'-phosphate; these read QIV and GFPR. An LID region spans residues 141 to 151; it reads ERGKTSGRSDD. Arg-142 provides a ligand contact to ATP. Arg-148 and Arg-159 together coordinate a ribonucleoside 5'-phosphate. Arg-187 provides a ligand contact to ATP.

This sequence belongs to the adenylate kinase family. UMP-CMP kinase subfamily. In terms of assembly, monomer. Requires Mg(2+) as cofactor.

The protein resides in the cytoplasm. It is found in the nucleus. The catalysed reaction is UMP + ATP = UDP + ADP. Functionally, catalyzes the phosphorylation of pyrimidine nucleoside monophosphates at the expense of ATP. Plays an important role in de novo pyrimidine nucleotide biosynthesis. Has preference for UMP and dUMP as phosphate acceptors, but can also use CMP, dCMP, AMP, GMP, dGMP and dTMP. ATP and dATP are the best phosphate donors, but can also use GTP, dGTP, dCTP, and dTTP to some degree. The protein is Uridylate kinase of Saccharomyces cerevisiae (strain ATCC 204508 / S288c) (Baker's yeast).